Reading from the N-terminus, the 543-residue chain is MARYIFITGGVVSSLGKGLASAALGALLQARGYKVRLRKLDPYLNLDPGTMSPYQHGEVFVTDDGAETDLDLGHYERFTGRPATKADNITTGRIYQDIITKERRGDYLGATIQVVPHVTNAIKEFVLDGNDDYDFVLVEIGGTVGDIEGLPFFEAIRQLKNDLPRDHAVYIHLTLLPYIPSAGELKTKPTQHSVKELRSIGIQPDILLCRTDREIPKEERRKLGLFCNVRESAVIEARDVDNIYAVPEAYHNAGLDDEVLAAFGIASRIPPELRSWQQINERVRNPEGNVTIAIVGKYTGMKDAYKSLIEALSHGGIANKVKVNLDWIESEIFEKEDPAPFLEHVNGILVPGGFGQRGAEGKIRAAQFARERDVPYFGICFGMQMAVIEAARNLVGIEDANSTEFGPTKEPLVGLMTEWLRGNELEKRSQAGDLGGTMRLGAYPAALNRGSRVSQVYGGATEISERHRHRYEVNTAYKDRLEQHGLKFSGLSPDGVLPEIVEYEDHPWFIGVQFHPELKSRPFEPHPLFASFIQAAMVQSRLV.

The segment at 1–265 (MARYIFITGG…DDEVLAAFGI (265 aa)) is amidoligase domain. Ser-13 is a CTP binding site. Ser-13 lines the UTP pocket. ATP is bound at residue 14–19 (SLGKGL). An L-glutamine-binding site is contributed by Tyr-54. Asp-71 contacts ATP. Positions 71 and 139 each coordinate Mg(2+). Residues 146–148 (DIE), 186–191 (KTKPTQ), and Lys-222 each bind CTP. UTP-binding positions include 186 to 191 (KTKPTQ) and Lys-222. ATP is bound at residue 238 to 240 (RDV). The 252-residue stretch at 291-542 (TIAIVGKYTG…IQAAMVQSRL (252 aa)) folds into the Glutamine amidotransferase type-1 domain. Position 353 (Gly-353) interacts with L-glutamine. Catalysis depends on Cys-380, which acts as the Nucleophile; for glutamine hydrolysis. L-glutamine contacts are provided by residues 381 to 384 (FGMQ), Glu-404, and Arg-470. Active-site residues include His-515 and Glu-517.

The protein belongs to the CTP synthase family. Homotetramer.

It carries out the reaction UTP + L-glutamine + ATP + H2O = CTP + L-glutamate + ADP + phosphate + 2 H(+). The catalysed reaction is L-glutamine + H2O = L-glutamate + NH4(+). The enzyme catalyses UTP + NH4(+) + ATP = CTP + ADP + phosphate + 2 H(+). Its pathway is pyrimidine metabolism; CTP biosynthesis via de novo pathway; CTP from UDP: step 2/2. Its activity is regulated as follows. Allosterically activated by GTP, when glutamine is the substrate; GTP has no effect on the reaction when ammonia is the substrate. The allosteric effector GTP functions by stabilizing the protein conformation that binds the tetrahedral intermediate(s) formed during glutamine hydrolysis. Inhibited by the product CTP, via allosteric rather than competitive inhibition. Functionally, catalyzes the ATP-dependent amination of UTP to CTP with either L-glutamine or ammonia as the source of nitrogen. Regulates intracellular CTP levels through interactions with the four ribonucleotide triphosphates. The polypeptide is CTP synthase (Bradyrhizobium diazoefficiens (strain JCM 10833 / BCRC 13528 / IAM 13628 / NBRC 14792 / USDA 110)).